The sequence spans 247 residues: Granzyme B(G,H) (247 aa).

An N-terminal signal peptide occupies residues 1–18 (MKILLLLLTLSLASRTKA). Positions 19 to 20 (GE) are cleaved as a propeptide — activation peptide. Positions 21–245 (IIGGHEVKPH…FLSWIKKTMK (225 aa)) constitute a Peptidase S1 domain. C49 and C65 are oxidised to a cystine. The Charge relay system role is filled by H64. N71 is a glycosylation site (N-linked (GlcNAc...) asparagine). The active-site Charge relay system is D108. Disulfide bonds link C142/C209 and C173/C188. N182 carries N-linked (GlcNAc...) asparagine glycosylation. The Charge relay system role is filled by S203.

The protein belongs to the peptidase S1 family. Granzyme subfamily.

It is found in the secreted. The protein localises to the cytolytic granule. The enzyme catalyses Preferential cleavage: -Asp-|-Xaa- &gt;&gt; -Asn-|-Xaa- &gt; -Met-|-Xaa-, -Ser-|-Xaa-.. Inactivated by the serine protease inhibitor diisopropylfluorophosphate. Abundant protease in the cytosolic granules of cytotoxic T-cells and NK-cells which activates caspase-independent pyroptosis when delivered into the target cell through the immunological synapse. It cleaves after Asp. Once delivered into the target cell, acts by catalyzing cleavage of gasdermin-E (GSDME), releasing the pore-forming moiety of GSDME, thereby triggering pyroptosis and target cell death. Seems to be linked to an activation cascade of caspases (aspartate-specific cysteine proteases) responsible for apoptosis execution. Cleaves caspase-3 and -9 (CASP3 and CASP9, respectively) to give rise to active enzymes mediating apoptosis. Cleaves and activates CASP7 in response to bacterial infection, promoting plasma membrane repair. This chain is Granzyme B(G,H) (Gzmb), found in Mus musculus (Mouse).